The primary structure comprises 475 residues: Ribulose bisphosphate carboxylase large chain (475 aa).

The propeptide occupies 1-2 (MS). The residue at position 3 (Pro-3) is an N-acetylproline. Lys-14 carries the N6,N6,N6-trimethyllysine modification. Substrate-binding residues include Asn-123 and Thr-173. Lys-175 functions as the Proton acceptor in the catalytic mechanism. Position 177 (Lys-177) interacts with substrate. Positions 201, 203, and 204 each coordinate Mg(2+). Lys-201 bears the N6-carboxylysine mark. His-294 acts as the Proton acceptor in catalysis. Residues Arg-295, His-327, and Ser-379 each contribute to the substrate site.

This sequence belongs to the RuBisCO large chain family. Type I subfamily. In terms of assembly, heterohexadecamer of 8 large chains and 8 small chains; disulfide-linked. The disulfide link is formed within the large subunit homodimers. Requires Mg(2+) as cofactor. Post-translationally, the disulfide bond which can form in the large chain dimeric partners within the hexadecamer appears to be associated with oxidative stress and protein turnover.

It localises to the plastid. Its subcellular location is the chloroplast. It carries out the reaction 2 (2R)-3-phosphoglycerate + 2 H(+) = D-ribulose 1,5-bisphosphate + CO2 + H2O. The catalysed reaction is D-ribulose 1,5-bisphosphate + O2 = 2-phosphoglycolate + (2R)-3-phosphoglycerate + 2 H(+). RuBisCO catalyzes two reactions: the carboxylation of D-ribulose 1,5-bisphosphate, the primary event in carbon dioxide fixation, as well as the oxidative fragmentation of the pentose substrate in the photorespiration process. Both reactions occur simultaneously and in competition at the same active site. The polypeptide is Ribulose bisphosphate carboxylase large chain (Castanea sativa (Sweet chestnut)).